The sequence spans 129 residues: Large ribosomal subunit protein bL17 (129 aa).

The protein belongs to the bacterial ribosomal protein bL17 family. Part of the 50S ribosomal subunit. Contacts protein L32.

This Thiobacillus denitrificans (strain ATCC 25259 / T1) protein is Large ribosomal subunit protein bL17.